We begin with the raw amino-acid sequence, 543 residues long: Thermosome subunit beta (543 aa).

The segment at 522-543 (TKSSSSSSNPPKSGSSSESSED) is disordered. A compositionally biased stretch (low complexity) spans 523-543 (KSSSSSSNPPKSGSSSESSED).

This sequence belongs to the TCP-1 chaperonin family. Forms a Heterooligomeric complex of two stacked eight-membered rings. The N-terminus is blocked.

Molecular chaperone; binds unfolded polypeptides in vitro, and has a weak ATPase activity. The sequence is that of Thermosome subunit beta (thsB) from Thermoplasma acidophilum (strain ATCC 25905 / DSM 1728 / JCM 9062 / NBRC 15155 / AMRC-C165).